A 786-amino-acid polypeptide reads, in one-letter code: Rho GTPase-activating protein 10 (786 aa).

In terms of domain architecture, BAR spans 7–262; that stretch reads EFSDCYLDSP…IRQNPKDHKR (256 aa). A PH domain is found at 265–372; that stretch reads QFTAEGYLYV…WLEALGGKEA (108 aa). Residues 389–574 form the Rho-GAP domain; that stretch reads AQLDKMGFTI…ILIENHEKIF (186 aa). Disordered stretches follow at residues 576 to 608 and 621 to 727; these read TPPD…QRTK and EDGD…PPES. The span at 599-608 shows a compositional bias: basic residues; that stretch reads QSKRQGQRTK. The span at 634–651 shows a compositional bias: low complexity; the sequence is PTSSLDSLSSPSPVTTAV. The span at 676–688 shows a compositional bias: polar residues; it reads IPGQTRSSMVQWL. Over residues 689-712 the composition is skewed to low complexity; the sequence is NPQSPTTTSSNSAVTPLSPGSSPF. An SH3 domain is found at 728–786; that stretch reads IRSRKARAVYPCEAEHSSELSFEIGAIFEDVQTSREPGWLEGTLNGKRGLIPQNYVKLL.

In terms of assembly, interacts with PKN3. Interacts with caspase-activated PAK2 proteolytic fragment PAK-2p34; the interaction does not affect GRAF2/ARHGAP10 GTPase activation activity towards RHOA and CDC42. Interacts via its SH3 domain with PTK2/FAK1. Interacts with PTK2B/PYK2; the interaction negatively regulates GRAF2/ARHGAP10 GTPase-activating activity. Interacts with MICAL1 and WDR44; complex formation might transit from GRAF2/ARHGAP10-MICAL1 to GRAF2/ARHGAP10-WDR44 complexes. In terms of processing, phosphorylated. Phosphorylated in vitro by constitutive active PKN3. High levels of expression in heart and skeletal muscle.

Its subcellular location is the cytoplasm. The protein localises to the perinuclear region. It is found in the cell membrane. It localises to the endosome membrane. Its function is as follows. GTPase-activating protein that catalyzes the conversion of active GTP-bound Rho GTPases to their inactive GDP-bound form, thus suppressing various Rho GTPase-mediated cellular processes. Also converts Cdc42 to an inactive GDP-bound state. Essential for PTKB2 regulation of cytoskeletal organization via Rho family GTPases. Inhibits PAK2 proteolytic fragment PAK-2p34 kinase activity and changes its localization from the nucleus to the perinuclear region. Stabilizes PAK-2p34 thereby increasing stimulation of cell death. Associates with MICAL1 on the endosomal membrane to promote Rab8-Rab10-dependent tubule extension. After dissociation with MICAL1, recruits WDR44 which connects the endoplasmic reticulum (ER) with the endosomal tubule, thereby participating in the export of a subset of neosynthesized proteins. The sequence is that of Rho GTPase-activating protein 10 (ARHGAP10) from Homo sapiens (Human).